The following is a 453-amino-acid chain: Ribosome biogenesis protein SSF1 (453 aa).

Basic residues predominate over residues 1–11 (MAKRRQKKRTH). Disordered regions lie at residues 1–22 (MAKRRQKKRTHAQLTPEQEQGI), 275–324 (KAKH…PRKK), and 374–453 (KMRL…SEVE). A Brix domain is found at 26–348 (MVIRVGQTSL…LVKIEEGICS (323 aa)). The span at 288-300 (PVEKKDNKEREKE) shows a compositional bias: basic and acidic residues. Position 301 is a phosphothreonine (T301). Residues 374 to 398 (KMRLKEQRKKEQEENIAKKKAVKDA) are compositionally biased toward basic and acidic residues. The segment covering 399-409 (KKQRKLERRKA) has biased composition (basic residues). Residues 410–423 (RAAEGGEGQGKDDA) show a composition bias toward basic and acidic residues. Acidic residues predominate over residues 442–453 (EDLDSDLFSEVE).

Part of a complex that includes BRX1, RPF1, RPF2 and SSF1 or SSF2.

It localises to the nucleus. The protein localises to the nucleolus. In terms of biological role, required for biogenesis of the 60S ribosomal subunit. In Saccharomyces cerevisiae (strain ATCC 204508 / S288c) (Baker's yeast), this protein is Ribosome biogenesis protein SSF1 (SSF1).